Reading from the N-terminus, the 154-residue chain is Protein X (154 aa).

Residues 68-117 are mitochondrial targeting sequence; it reads PCALRFTSARRMETTVNAHGNLPKVLHKRTLGLSAMSTTDLEAYFKDCVF.

It belongs to the orthohepadnavirus protein X family. As to quaternary structure, may form homodimer. May interact with host CEBPA, CFLAR, CREB1, DDB1, E4F1, HBXIP, HSPD1/HSP60, NFKBIA, POLR2E and SMAD4. Interacts with host SMC5-SMC6 complex and induces its degradation. Interacts with host TRPC4AP; leading to prevent ubiquitination of TRPC4AP. Interacts with host PLSCR1; this interaction promotes ubiquitination and degradation of HBx and impairs HBx-mediated cell proliferation. A fraction may be phosphorylated in insect cells and HepG2 cells, a human hepatoblastoma cell line. Phosphorylated in vitro by host protein kinase C or mitogen-activated protein kinase. N-acetylated in insect cells.

The protein resides in the host cytoplasm. It is found in the host nucleus. It localises to the host mitochondrion. Its function is as follows. Multifunctional protein that plays a role in silencing host antiviral defenses and promoting viral transcription. Does not seem to be essential for HBV infection. May be directly involved in development of cirrhosis and liver cancer (hepatocellular carcinoma). Most of cytosolic activities involve modulation of cytosolic calcium. The effect on apoptosis is controversial depending on the cell types in which the studies have been conducted. May induce apoptosis by localizing in mitochondria and causing loss of mitochondrial membrane potential. May also modulate apoptosis by binding host CFLAR, a key regulator of the death-inducing signaling complex (DISC). Promotes viral transcription by using the host E3 ubiquitin ligase DDB1 to target the SMC5-SMC6 complex to proteasomal degradation. This host complex would otherwise bind to viral episomal DNA, and prevents its transcription. Moderately stimulates transcription of many different viral and cellular transcription elements. Promoters and enhancers stimulated by HBx contain DNA binding sites for NF-kappa-B, AP-1, AP-2, c-EBP, ATF/CREB, or the calcium-activated factor NF-AT. This Hepatitis B virus genotype B/C subtype adw (isolate Okinawa/pODW282/1998) (HBV-B) protein is Protein X.